The chain runs to 114 residues: ATP synthase subunit beta, mitochondrial (114 aa).

Residue 44 to 51 coordinates ATP; sequence GGAGVGKT.

It belongs to the ATPase alpha/beta chains family. As to quaternary structure, F-type ATPases have 2 components, CF(1) - the catalytic core - and CF(0) - the membrane proton channel. CF(1) has five subunits: alpha(3), beta(3), gamma(1), delta(1), epsilon(1). CF(0) has three main subunits: a, b and c.

It localises to the mitochondrion. It is found in the mitochondrion inner membrane. It catalyses the reaction ATP + H2O + 4 H(+)(in) = ADP + phosphate + 5 H(+)(out). Mitochondrial membrane ATP synthase (F(1)F(0) ATP synthase or Complex V) produces ATP from ADP in the presence of a proton gradient across the membrane which is generated by electron transport complexes of the respiratory chain. F-type ATPases consist of two structural domains, F(1) - containing the extramembraneous catalytic core, and F(0) - containing the membrane proton channel, linked together by a central stalk and a peripheral stalk. During catalysis, ATP synthesis in the catalytic domain of F(1) is coupled via a rotary mechanism of the central stalk subunits to proton translocation. Subunits alpha and beta form the catalytic core in F(1). Rotation of the central stalk against the surrounding alpha(3)beta(3) subunits leads to hydrolysis of ATP in three separate catalytic sites on the beta subunits. This chain is ATP synthase subunit beta, mitochondrial (atp2), found in Penicillium glabrum (Penicillium frequentans).